The chain runs to 731 residues: Golgin subfamily A member 5 (731 aa).

An N-acetylserine modification is found at Ser-2. At 2–698 the chain is on the cytoplasmic side; the sequence is SWFVDLAGKA…IFLRRYPIAR (697 aa). Arg-89 is subject to Dimethylated arginine. Positions 93-222 are disordered; the sequence is EASHPVENAS…PTPNDDGKSH (130 aa). A Phosphoserine modification is found at Ser-116. The span at 134–146 shows a compositional bias: basic and acidic residues; sequence PTGRVEIRKEKGK. A compositionally biased stretch (low complexity) spans 147–167; the sequence is TPVFQSSQTSSVSSVNPSVTT. A compositionally biased stretch (polar residues) spans 173–188; sequence ENSFGSQTHEAASNSD. Over residues 189-199 the composition is skewed to basic and acidic residues; the sequence is SSHEGQEESSK. A coiled-coil region spans residues 216–632; sequence NDDGKSHELS…EQQMNSASGS (417 aa). Residues 699–719 form a helical; Anchor for type IV membrane protein membrane-spanning segment; it reads VFVIIYMALLHLWVMIVLLTY. The Lumenal portion of the chain corresponds to 720–731; it reads TPEMHHDQPYGK.

In terms of assembly, homodimer. Interacts with RAB1A that has been activated by GTP-binding, and possibly also with OCRL1. Interacts with isoform CASP of CUX1. Highly phosphorylated during mitosis. Phosphorylation is barely detectable during interphase. In terms of tissue distribution, ubiquitous. Highly expressed in seminiferous tubules and Leydig cells in testis, and detected at much lower levels in the other tissues tested. Expression is very low or not detectable in spermatozoa.

The protein resides in the golgi apparatus membrane. In terms of biological role, involved in maintaining Golgi structure. Stimulates the formation of Golgi stacks and ribbons. Involved in intra-Golgi retrograde transport. The protein is Golgin subfamily A member 5 (GOLGA5) of Homo sapiens (Human).